A 361-amino-acid polypeptide reads, in one-letter code: Caffeic acid 3-O-methyltransferase 2 (361 aa).

Substrate is bound at residue 128–134 (MNQDKVL). Residues 160 to 178 (AFEYHGTDPRFNKVFNQGM) form a substrate binding region. S-adenosyl-L-methionine is bound by residues G206, D229, D249, M250, and K263. H267 acts as the Proton acceptor in catalysis.

The protein belongs to the class I-like SAM-binding methyltransferase superfamily. Cation-independent O-methyltransferase family. COMT subfamily. Homodimer.

It carries out the reaction (E)-caffeate + S-adenosyl-L-methionine = (E)-ferulate + S-adenosyl-L-homocysteine + H(+). The protein operates within aromatic compound metabolism; phenylpropanoid biosynthesis. Catalyzes the conversion of caffeic acid to ferulic acid and of 5-hydroxyferulic acid to sinapic acid. The resulting products may subsequently be converted to the corresponding alcohols that are incorporated into lignins. The sequence is that of Caffeic acid 3-O-methyltransferase 2 (COMT2) from Ocimum basilicum (Sweet basil).